A 1173-amino-acid chain; its full sequence is Paired amphipathic helix protein Sin3-like 6 (1173 aa).

The segment at 40-75 (NQSAGESGRRLKMKRAREDVHTDTQKRKPEVSSRGE) is disordered. Over residues 55–75 (AREDVHTDTQKRKPEVSSRGE) the composition is skewed to basic and acidic residues. PAH domains are found at residues 79 to 148 (LPRT…LPKG) and 162 to 232 (IRVD…LPNC). 3 disordered regions span residues 236–337 (APST…TTKY), 655–697 (TASG…TAQP), and 740–813 (KHEL…ENNK). 2 stretches are compositionally biased toward basic and acidic residues: residues 264–276 (CKLE…SDQR) and 301–319 (RDYE…RTEK). Residues 320–337 (SAASGSQDIGNHKSTTKY) show a composition bias toward polar residues. Over residues 750–765 (PTASREQSNFEVNGQN) the composition is skewed to polar residues. Basic and acidic residues predominate over residues 778–810 (RSNKDKQSCDKKGAKNKTRAEDDKQENCHKLSE).

The protein localises to the nucleus. Acts as a transcriptional repressor. Plays roles in regulating gene expression and genome stability. The chain is Paired amphipathic helix protein Sin3-like 6 (SNL6) from Arabidopsis thaliana (Mouse-ear cress).